Reading from the N-terminus, the 371-residue chain is Maltose/maltodextrin import ATP-binding protein MalK (371 aa).

One can recognise an ABC transporter domain in the interval 4-234; it reads VQLQNVTKAW…PADRFVAGFI (231 aa). 36 to 43 serves as a coordination point for ATP; that stretch reads GPSGCGKS.

The protein belongs to the ABC transporter superfamily. Maltooligosaccharide importer (TC 3.A.1.1.1) family. As to quaternary structure, the complex is composed of two ATP-binding proteins (MalK), two transmembrane proteins (MalG and MalK) and a solute-binding protein (MalE).

It localises to the cell inner membrane. The enzyme catalyses D-maltose(out) + ATP + H2O = D-maltose(in) + ADP + phosphate + H(+). In terms of biological role, part of the ABC transporter complex MalEFGK involved in maltose/maltodextrin import. Responsible for energy coupling to the transport system. This is Maltose/maltodextrin import ATP-binding protein MalK from Escherichia coli O157:H7.